Consider the following 210-residue polypeptide: 3-hexulose-6-phosphate synthase (210 aa).

Belongs to the HPS/KGPDC family. HPS subfamily.

It catalyses the reaction D-ribulose 5-phosphate + formaldehyde = D-arabino-hex-3-ulose 6-phosphate. Its pathway is one-carbon metabolism; formaldehyde assimilation via RuMP pathway; D-fructose 6-phosphate from D-ribulose 5-phosphate and formaldehyde: step 1/2. Functionally, catalyzes the condensation of ribulose 5-phosphate with formaldehyde to form 3-hexulose 6-phosphate. Together with HxlB, may act as a formaldehyde detoxification system. This is 3-hexulose-6-phosphate synthase (hxlA) from Bacillus subtilis (strain 168).